The primary structure comprises 367 residues: Putative S-adenosyl-L-methionine-dependent methyltransferase MT0751 (367 aa).

Residues Asp137 and 166-167 (DL) each bind S-adenosyl-L-methionine. Polar residues predominate over residues 348–358 (TRSDAHQASTT). The tract at residues 348-367 (TRSDAHQASTTAPPPPGLTG) is disordered.

It belongs to the UPF0677 family.

Exhibits S-adenosyl-L-methionine-dependent methyltransferase activity. In Mycobacterium tuberculosis (strain CDC 1551 / Oshkosh), this protein is Putative S-adenosyl-L-methionine-dependent methyltransferase MT0751.